A 645-amino-acid polypeptide reads, in one-letter code: 1-deoxy-D-xylulose-5-phosphate synthase (645 aa).

Thiamine diphosphate contacts are provided by residues His83 and 124–126; that span reads GHS. Asp155 serves as a coordination point for Mg(2+). Residues 156-157, Asn184, Tyr295, and Glu376 each bind thiamine diphosphate; that span reads GS. A Mg(2+)-binding site is contributed by Asn184.

It belongs to the transketolase family. DXPS subfamily. In terms of assembly, homodimer. Mg(2+) serves as cofactor. It depends on thiamine diphosphate as a cofactor.

It catalyses the reaction D-glyceraldehyde 3-phosphate + pyruvate + H(+) = 1-deoxy-D-xylulose 5-phosphate + CO2. It functions in the pathway metabolic intermediate biosynthesis; 1-deoxy-D-xylulose 5-phosphate biosynthesis; 1-deoxy-D-xylulose 5-phosphate from D-glyceraldehyde 3-phosphate and pyruvate: step 1/1. Its function is as follows. Catalyzes the acyloin condensation reaction between C atoms 2 and 3 of pyruvate and glyceraldehyde 3-phosphate to yield 1-deoxy-D-xylulose-5-phosphate (DXP). This chain is 1-deoxy-D-xylulose-5-phosphate synthase, found in Desulfotalea psychrophila (strain LSv54 / DSM 12343).